Reading from the N-terminus, the 416-residue chain is MFGRVPRSNNTKYYEVLGVPKTASKDELKKAYRKAAIKNHPDKGGDPEKFKELSQAYEVLTDPEKRDIYDQYGEDALKDGMGGGSDFHNPFDIFEQFFGGGAFGGSSSRVRRQRRGEDVAHTLKVSLEDVYNGSMKKLSLSRNILCPKCKGKGTKSEAPATCYGCHGVGMRNIMRQIGLGMIQHMQTVCPECRGSGEIISDRDKCTNCRASKVIQEKKVLEVHIEKGMQHGQKIVFQGEADEAPDTVTGDIVFILQVKVHPRFKRKYDDLFIERTISLTEALCGFQFILTHLDSRQLLIKANPGEIIKPGQHKAINDEGMPHHGRPFMKGRLFVEFNVEFPESGVLSRDQCRALEMILPPKPGHQLSDMDLDQCEETTMHDVNIEEEMRRKQYQRKQEAYDEDEEEDAPRVQCAQQ.

The region spanning 12–73 (KYYEVLGVPK…EKRDIYDQYG (62 aa)) is the J domain. The segment at 133 to 217 (GSMKKLSLSR…CRASKVIQEK (85 aa)) adopts a CR-type zinc-finger fold. Zn(2+) is bound by residues Cys146, Cys149, Cys162, Cys165, Cys189, Cys192, Cys205, and Cys208. 3 CXXCXGXG motif repeats span residues 146–153 (CPKCKGKG), 162–169 (CYGCHGVG), and 189–196 (CPECRGSG). Residues 380–399 (HDVNIEEEMRRKQYQRKQEA) show a composition bias toward basic and acidic residues. Residues 380–416 (HDVNIEEEMRRKQYQRKQEAYDEDEEEDAPRVQCAQQ) form a disordered region.

The protein belongs to the DnaJ family. As to quaternary structure, interacts with ZFP1.

The protein localises to the nucleus. It localises to the cytoplasm. Its function is as follows. Involved in disease resistance. Acts as a negative regulator of innate immunity to the rice blast fungus (Magnaporthe oryzae). Acts as a negative regulator of the pathogen-associated molecular pattern (PAMP)-triggered immunity (PTI) response through the inhibition of reactive oxygen species (ROS) accumulation and expression of defense-related genes. May function via the ubiquitin-proteasome degradation pathway. This chain is Chaperone protein dnaJ A6, found in Oryza sativa subsp. japonica (Rice).